The primary structure comprises 651 residues: Mitogen-activated protein kinase kinase kinase 3 (651 aa).

The Protein kinase domain occupies 68-330 (WRKGELIGCG…ATELLQHPFV (263 aa)). Residues 74–82 (IGCGAFGRV) and Lys97 each bind ATP. Residues 105–130 (SASKEKTQGHIRELEEEVQLLKNLSH) are a coiled coil. Residues Lys108 and Lys110 each participate in a glycyl lysine isopeptide (Lys-Gly) (interchain with G-Cter in ubiquitin) cross-link. Asp196 (proton acceptor) is an active-site residue. The interval 573-608 (MPSPLKSSKRTLNTSRVMQSGTEPTQVNESTKKGVN) is disordered. The segment covering 582 to 608 (RTLNTSRVMQSGTEPTQVNESTKKGVN) has biased composition (polar residues). Residues 618–641 (RKWEEELYEELERHRENLRHAGAG) adopt a coiled-coil conformation.

It belongs to the protein kinase superfamily. STE Ser/Thr protein kinase family. MAP kinase kinase kinase subfamily. In terms of assembly, interacts with NACK2 and MKK6. Expressed in roots and flowers.

It is found in the cytoplasm. Its subcellular location is the cytoskeleton. It catalyses the reaction L-seryl-[protein] + ATP = O-phospho-L-seryl-[protein] + ADP + H(+). The catalysed reaction is L-threonyl-[protein] + ATP = O-phospho-L-threonyl-[protein] + ADP + H(+). Functionally, involved in cortical microtubules organization and stabilization by regulating the phosphorylation state of microtubule-associated proteins such as MAP65-1. This is Mitogen-activated protein kinase kinase kinase 3 (ANP3) from Arabidopsis thaliana (Mouse-ear cress).